We begin with the raw amino-acid sequence, 195 residues long: Imidazoleglycerol-phosphate dehydratase (195 aa).

The protein belongs to the imidazoleglycerol-phosphate dehydratase family.

It is found in the cytoplasm. The enzyme catalyses D-erythro-1-(imidazol-4-yl)glycerol 3-phosphate = 3-(imidazol-4-yl)-2-oxopropyl phosphate + H2O. The protein operates within amino-acid biosynthesis; L-histidine biosynthesis; L-histidine from 5-phospho-alpha-D-ribose 1-diphosphate: step 6/9. The polypeptide is Imidazoleglycerol-phosphate dehydratase (Burkholderia ambifaria (strain MC40-6)).